The sequence spans 659 residues: A-type ATP synthase subunit I (659 aa).

Transmembrane regions (helical) follow at residues 376-396 (FFFG…IISA), 415-435 (IMLW…SYCG), 460-480 (MIAL…GFIV), 489-509 (GAIF…LFAL), 518-538 (LIVK…EVLA), 542-562 (MAVL…LSYA), 568-588 (ALAT…IWGI), and 590-610 (IASV…GHIF).

Belongs to the V-ATPase 116 kDa subunit family. In terms of assembly, has multiple subunits with at least A(3), B(3), C, D, E, F, H, I and proteolipid K(x).

It localises to the cell membrane. Functionally, component of the A-type ATP synthase that produces ATP from ADP in the presence of a proton gradient across the membrane. This chain is A-type ATP synthase subunit I, found in Pyrococcus horikoshii (strain ATCC 700860 / DSM 12428 / JCM 9974 / NBRC 100139 / OT-3).